Here is a 430-residue protein sequence, read N- to C-terminus: tRNA(Ile)-lysidine synthase (430 aa).

27 to 32 (SGGSDS) contributes to the ATP binding site.

The protein belongs to the tRNA(Ile)-lysidine synthase family.

The protein resides in the cytoplasm. It carries out the reaction cytidine(34) in tRNA(Ile2) + L-lysine + ATP = lysidine(34) in tRNA(Ile2) + AMP + diphosphate + H(+). Ligates lysine onto the cytidine present at position 34 of the AUA codon-specific tRNA(Ile) that contains the anticodon CAU, in an ATP-dependent manner. Cytidine is converted to lysidine, thus changing the amino acid specificity of the tRNA from methionine to isoleucine. The sequence is that of tRNA(Ile)-lysidine synthase from Rickettsia typhi (strain ATCC VR-144 / Wilmington).